A 719-amino-acid polypeptide reads, in one-letter code: Protein STRUBBELIG-RECEPTOR FAMILY 6 (719 aa).

The signal sequence occupies residues 1-29 (MRENWAVVALFTLCIVGFELRFIHGATDA). At 30-293 (SDTSALNTLF…SKKSGIGAGA (264 aa)) the chain is on the extracellular side. 6 LRR repeats span residues 97-118 (SLTELDLSSNNLGGDLPYQFPP), 119-140 (NLQRLNLANNQFTGAASYSLSQ), 143-164 (PLKYLNLGHNQFKGQIAIDFSK), 167-190 (SLTTLDFSFNSFTNSLPATFSSLT), 191-213 (SLKSLYLQNNQFSGTVDVLAGLP), and 214-234 (LETLNIANNDFTGWIPSSLKG). The segment at 242–287 (NSFNTGPAPPPPPGTPPIRGSPSRKSGGRESRSSDESTRNGDSKKS) is disordered. Over residues 248 to 257 (PAPPPPPGTP) the composition is skewed to pro residues. Over residues 268 to 286 (GGRESRSSDESTRNGDSKK) the composition is skewed to basic and acidic residues. The chain crosses the membrane as a helical span at residues 294–314 (IAGIIISLLVVTALLVAFFLF). The Cytoplasmic segment spans residues 315–719 (RRKKSKRSSP…GSADTTSDYM (405 aa)). Disordered stretches follow at residues 322 to 355 (SSPMDIEKTDNQPFTLASNDFHENNSIQSSSSVE) and 364 to 383 (SINLRPPPIDRNKSFDDEDS). Residues 332–354 (NQPFTLASNDFHENNSIQSSSSV) show a composition bias toward polar residues. Phosphoserine is present on S377. The Protein kinase domain occupies 416–690 (FSVDNLLGEG…SEVVQALVVL (275 aa)). ATP contacts are provided by residues 422–430 (LGEGTFGRV) and K444. Positions 700 to 719 (TVGVDPSQRAGSADTTSDYM) are disordered. Residues 708 to 719 (RAGSADTTSDYM) show a composition bias toward polar residues.

The protein belongs to the protein kinase superfamily. Ser/Thr protein kinase family. As to expression, expressed in seedlings, roots, stems, leaves, flowers and siliques.

It is found in the membrane. This Arabidopsis thaliana (Mouse-ear cress) protein is Protein STRUBBELIG-RECEPTOR FAMILY 6 (SRF6).